The following is a 255-amino-acid chain: 5'-nucleotidase SurE (255 aa).

Residues Asp-8, Asp-9, Ser-40, and Asn-93 each coordinate a divalent metal cation.

It belongs to the SurE nucleotidase family. The cofactor is a divalent metal cation.

It is found in the cytoplasm. The enzyme catalyses a ribonucleoside 5'-phosphate + H2O = a ribonucleoside + phosphate. Its function is as follows. Nucleotidase that shows phosphatase activity on nucleoside 5'-monophosphates. This Rhodopseudomonas palustris (strain BisB18) protein is 5'-nucleotidase SurE.